Reading from the N-terminus, the 465-residue chain is Fumarate hydratase class II (465 aa).

Residues 100 to 102, 131 to 134, 141 to 143, and Thr189 contribute to the substrate site; these read SGT, HPND, and SSN. His190 serves as the catalytic Proton donor/acceptor. Ser320 is a catalytic residue. Substrate contacts are provided by residues Ser321 and 326-328; that span reads KVN.

Belongs to the class-II fumarase/aspartase family. Fumarase subfamily. In terms of assembly, homotetramer.

It is found in the cytoplasm. It catalyses the reaction (S)-malate = fumarate + H2O. It functions in the pathway carbohydrate metabolism; tricarboxylic acid cycle; (S)-malate from fumarate: step 1/1. Involved in the TCA cycle. Catalyzes the stereospecific interconversion of fumarate to L-malate. This chain is Fumarate hydratase class II, found in Mesorhizobium japonicum (strain LMG 29417 / CECT 9101 / MAFF 303099) (Mesorhizobium loti (strain MAFF 303099)).